A 1048-amino-acid polypeptide reads, in one-letter code: Probable beta-glucosidase E (1048 aa).

The disordered stretch occupies residues 1-54; it reads MPPPPFRDAPSSAKSSQRYTPLHESIPEELNDKQYSSDADSLPLSDPSDGEDDS. Over 1–150 the chain is Cytoplasmic; that stretch reads MPPPPFRDAP…WRTVYYSKYW (150 aa). The segment covering 36-47 has biased composition (low complexity); sequence SSDADSLPLSDP. The helical; Signal-anchor for type II membrane protein transmembrane segment at 151 to 171 threads the bilayer; it reads WRALIGVVVVLVLLVLVFLGL. Topologically, residues 172-1048 are extracellular; that stretch reads ARSKQVGDEL…SRDLPLHGKY (877 aa). N216, N224, and N410 each carry an N-linked (GlcNAc...) asparagine glycan. D438 is a catalytic residue. N481, N520, N578, N895, and N991 each carry an N-linked (GlcNAc...) asparagine glycan. The segment at 508–527 is disordered; the sequence is WERPPPDGEGGPNFSSWTDD.

Belongs to the glycosyl hydrolase 3 family.

It localises to the cell membrane. It carries out the reaction Hydrolysis of terminal, non-reducing beta-D-glucosyl residues with release of beta-D-glucose.. It functions in the pathway glycan metabolism; cellulose degradation. In terms of biological role, beta-glucosidases are one of a number of cellulolytic enzymes involved in the degradation of cellulosic biomass. Catalyzes the last step releasing glucose from the inhibitory cellobiose. The polypeptide is Probable beta-glucosidase E (bglE) (Aspergillus oryzae (strain ATCC 42149 / RIB 40) (Yellow koji mold)).